A 132-amino-acid chain; its full sequence is Small ribosomal subunit protein uS11 (132 aa).

The span at 1–16 (MAAGMKGKRSRRRKER) shows a compositional bias: basic residues. A disordered region spans residues 1–20 (MAAGMKGKRSRRRKERKNVE).

This sequence belongs to the universal ribosomal protein uS11 family. As to quaternary structure, part of the 30S ribosomal subunit. Interacts with proteins S7 and S18. Binds to IF-3.

Its function is as follows. Located on the platform of the 30S subunit, it bridges several disparate RNA helices of the 16S rRNA. Forms part of the Shine-Dalgarno cleft in the 70S ribosome. In Clostridium botulinum (strain Hall / ATCC 3502 / NCTC 13319 / Type A), this protein is Small ribosomal subunit protein uS11.